Here is a 132-residue protein sequence, read N- to C-terminus: Small ribosomal subunit protein uS8 (132 aa).

This sequence belongs to the universal ribosomal protein uS8 family. As to quaternary structure, part of the 30S ribosomal subunit. Contacts proteins S5 and S12.

In terms of biological role, one of the primary rRNA binding proteins, it binds directly to 16S rRNA central domain where it helps coordinate assembly of the platform of the 30S subunit. This chain is Small ribosomal subunit protein uS8, found in Streptococcus mutans serotype c (strain ATCC 700610 / UA159).